Here is a 105-residue protein sequence, read N- to C-terminus: uncharacterized protein (105 aa).

The first 24 residues, 1 to 24, serve as a signal peptide directing secretion; that stretch reads MYWPCLVITPFTVGESFCLLLSLG.

This is an uncharacterized protein from Saccharomyces cerevisiae (strain ATCC 204508 / S288c) (Baker's yeast).